We begin with the raw amino-acid sequence, 207 residues long: MGSQASKGGVAVEGKAAAADPAAVKTNGQENGHVKTNGDVSAKAEGDAATTNGSAEAAKESEAGAGDAIEPAPAAEGEAAKPEGEATKETPKKKKKKFSLKNSFKFKGISLKKSKKNAEVKEEAAAAAPATEEKPEENGAATEEKKEEEAKAEETPAAPVETPKAEEPAAKAEEPAAAKEEAAAPAVEATKQTEETNSTPAPSEQKE.

Low complexity-rich tracts occupy residues 1–25 and 63–77; these read MGSQ…AAVK and AGAG…AAEG. Residues 1–207 form a disordered region; that stretch reads MGSQASKGGV…STPAPSEQKE (207 aa). Gly-2 carries the N-myristoyl glycine lipid modification. Residues 78–90 are compositionally biased toward basic and acidic residues; sequence EAAKPEGEATKET. The interval 93-116 is effector domain involved in lipid-binding; sequence KKKKKFSLKNSFKFKGISLKKSKK. Residues 100–109 show a composition bias toward low complexity; it reads LKNSFKFKGI. 2 stretches are compositionally biased toward basic and acidic residues: residues 131-154 and 163-182; these read TEEK…KAEE and PKAE…KEEA. Residues 195-207 are compositionally biased toward polar residues; it reads ETNSTPAPSEQKE.

Belongs to the MARCKS family. Strongly expressed in brain and eye. Also detected at lower levels in muscle.

It localises to the cytoplasm. It is found in the cytoskeleton. The protein localises to the cell membrane. Involved in the control of cell movement by regulating actin cytoskeleton homeostasis and filopodium and lamellipodium formation. This chain is MARCKS-related protein 1-B, found in Danio rerio (Zebrafish).